A 95-amino-acid chain; its full sequence is Protein TusB (95 aa).

The protein belongs to the DsrH/TusB family. As to quaternary structure, heterohexamer, formed by a dimer of trimers. The hexameric TusBCD complex contains 2 copies each of TusB, TusC and TusD. The TusBCD complex interacts with TusE.

The protein localises to the cytoplasm. Functionally, part of a sulfur-relay system required for 2-thiolation of 5-methylaminomethyl-2-thiouridine (mnm(5)s(2)U) at tRNA wobble positions. The chain is Protein TusB from Escherichia fergusonii (strain ATCC 35469 / DSM 13698 / CCUG 18766 / IAM 14443 / JCM 21226 / LMG 7866 / NBRC 102419 / NCTC 12128 / CDC 0568-73).